The sequence spans 333 residues: Probable tRNA pseudouridine synthase B (333 aa).

A compositionally biased stretch (basic and acidic residues) spans 1–14 (MKCPSREVFSKFEE). The tract at residues 1-27 (MKCPSREVFSKFEESTNPQWGKPPSQR) is disordered. The active-site Nucleophile is Asp71. The region spanning 238–313 (LPKIWVRDSA…LVARTDRVVM (76 aa)) is the PUA domain.

It belongs to the pseudouridine synthase TruB family. Type 2 subfamily.

It carries out the reaction uridine(55) in tRNA = pseudouridine(55) in tRNA. Functionally, could be responsible for synthesis of pseudouridine from uracil-55 in the psi GC loop of transfer RNAs. This is Probable tRNA pseudouridine synthase B from Pyrobaculum aerophilum (strain ATCC 51768 / DSM 7523 / JCM 9630 / CIP 104966 / NBRC 100827 / IM2).